A 273-amino-acid chain; its full sequence is Shikimate dehydrogenase (NADP(+)) (273 aa).

Residues serine 14–serine 16 and threonine 61 contribute to the shikimate site. Lysine 65 functions as the Proton acceptor in the catalytic mechanism. Positions 86 and 102 each coordinate shikimate. NADP(+)-binding positions include glycine 126 to alanine 130, asparagine 150 to arginine 155, and methionine 213. Tyrosine 215 contributes to the shikimate binding site. Glycine 237 is a binding site for NADP(+).

The protein belongs to the shikimate dehydrogenase family. Homodimer.

The enzyme catalyses shikimate + NADP(+) = 3-dehydroshikimate + NADPH + H(+). It functions in the pathway metabolic intermediate biosynthesis; chorismate biosynthesis; chorismate from D-erythrose 4-phosphate and phosphoenolpyruvate: step 4/7. Involved in the biosynthesis of the chorismate, which leads to the biosynthesis of aromatic amino acids. Catalyzes the reversible NADPH linked reduction of 3-dehydroshikimate (DHSA) to yield shikimate (SA). The polypeptide is Shikimate dehydrogenase (NADP(+)) (Aeromonas hydrophila subsp. hydrophila (strain ATCC 7966 / DSM 30187 / BCRC 13018 / CCUG 14551 / JCM 1027 / KCTC 2358 / NCIMB 9240 / NCTC 8049)).